The primary structure comprises 1007 residues: Serine/threonine-protein kinase PRP4 homolog (1007 aa).

Positions Met1–Leu104 are disordered. At Ala2 the chain carries N-acetylalanine. Ser8, Ser21, Ser24, and Ser33 each carry phosphoserine. Composition is skewed to basic residues over residues Lys40–His60 and Lys68–Lys82. Positions Glu83–Gly92 are enriched in basic and acidic residues. 2 positions are modified to phosphoserine: Ser88 and Ser94. Lys100 carries the post-translational modification N6-acetyllysine; alternate. A Glycyl lysine isopeptide (Lys-Gly) (interchain with G-Cter in SUMO2); alternate cross-link involves residue Lys100. A Glycyl lysine isopeptide (Lys-Gly) (interchain with G-Cter in SUMO2) cross-link involves residue Lys112. Residue Lys118 forms a Glycyl lysine isopeptide (Lys-Gly) (interchain with G-Cter in SUMO2); alternate linkage. Residue Lys118 forms a Glycyl lysine isopeptide (Lys-Gly) (interchain with G-Cter in SUMO1); alternate linkage. Ser132 bears the Phosphoserine mark. At Tyr141 the chain carries Phosphotyrosine. Disordered stretches follow at residues Tyr141–Glu535 and Asn560–Asp583. Phosphoserine is present on residues Ser143, Ser145, and Ser167. The segment covering Gly158 to Arg169 has biased composition (low complexity). Residues Lys171 and Lys178 each participate in a glycyl lysine isopeptide (Lys-Gly) (interchain with G-Cter in SUMO2) cross-link. Basic residues-rich tracts occupy residues Ser180 to Lys203 and Arg215 to Ser231. Phosphoserine is present on residues Ser240, Ser242, Ser258, Ser278, Ser292, and Ser294. Residues Arg248–Lys271 are compositionally biased toward basic and acidic residues. A compositionally biased stretch (basic and acidic residues) spans Ser294 to Lys303. The segment covering Asp304–Lys315 has biased composition (basic residues). The segment covering Arg316–Pro325 has biased composition (basic and acidic residues). Residues Ser328, Ser354, Ser356, Ser366, and Ser368 each carry the phosphoserine modification. The segment covering Pro342 to Arg367 has biased composition (basic residues). Thr385 carries the post-translational modification Phosphothreonine. Phosphoserine is present on Ser387. 2 stretches are compositionally biased toward basic and acidic residues: residues Arg395–Arg408 and Arg415–Asp429. 3 positions are modified to phosphoserine: Ser427, Ser431, and Ser437. Residues Pro438–Ser497 are compositionally biased toward basic residues. Phosphoserine is present on residues Ser518, Ser519, Ser520, Ser565, Ser569, Ser576, Ser578, and Ser580. Over residues Ser518 to Glu535 the composition is skewed to acidic residues. Low complexity predominate over residues Ser562 to Pro581. Glycyl lysine isopeptide (Lys-Gly) (interchain with G-Cter in SUMO2) cross-links involve residues Lys593 and Lys659. A Protein kinase domain is found at Tyr687–Ile1003. ATP contacts are provided by residues Thr693–Val701 and Lys717. Lys717 is modified (N6-acetyllysine). The Proton acceptor role is filled by Asp815. Tyr849 is modified (phosphotyrosine). At Ser852 the chain carries Phosphoserine.

Belongs to the protein kinase superfamily. CMGC Ser/Thr protein kinase family. In terms of assembly, interacts with CLK1 C-terminus. Associates with the U5 snRNP and NCOR1 deacetylase complexes. Identified in the spliceosome C complex. In terms of processing, phosphorylated by CLK1. Autophosphorylated; phosphorylation inhibits interaction with its targets, such as PRPF6 or SMARCA4.

The protein resides in the nucleus. Its subcellular location is the chromosome. It is found in the centromere. It localises to the kinetochore. It catalyses the reaction L-seryl-[protein] + ATP = O-phospho-L-seryl-[protein] + ADP + H(+). The catalysed reaction is L-threonyl-[protein] + ATP = O-phospho-L-threonyl-[protein] + ADP + H(+). Serine/threonine kinase involved in spliceosomal assembly as well as mitosis and signaling regulation. Connects chromatin mediated regulation of transcription and pre-mRNA splicing. During spliceosomal assembly, interacts with and phosphorylates PRPF6 and PRPF31, components of the U4/U6-U5 tri-small nuclear ribonucleoprotein (snRNP), to facilitate the formation of the spliceosome B complex. Plays a role in regulating transcription and the spindle assembly checkpoint (SAC). Associates with U5 snRNP and NCOR1 deacetylase complexes which may allow a coordination of pre-mRNA splicing with chromatin remodeling events involved in transcriptional regulation. Associates and probably phosphorylates SMARCA4 and NCOR1. Phosphorylates SRSF1. Associates with kinetochores during mitosis and is necessary for recruitment and maintenance of the checkpoint proteins such as MAD1L1 and MAD12L1 at the kinetochores. Phosphorylates and regulates the activity of the transcription factors such as ELK1 and KLF13. Phosphorylates nuclear YAP1 and WWTR1/TAZ which induces nuclear exclusion and regulates Hippo signaling pathway, involved in tissue growth control. The polypeptide is Serine/threonine-protein kinase PRP4 homolog (Prp4k) (Rattus norvegicus (Rat)).